The sequence spans 340 residues: Guanine nucleotide-binding protein subunit beta-4 (340 aa).

Ser-2 bears the N-acetylserine mark. Ser-2 carries the phosphoserine modification. 5 WD repeats span residues 53–92 (GHLA…KMHA), 95–134 (LRSS…GNVR), 141–179 (GHTG…QTTT), 182–221 (GHSG…CRQS), and 224–263 (GHVS…ELLL). His-266 carries the phosphohistidine modification. 2 WD repeats span residues 268-307 (NIIC…RAGV) and 310-339 (GHDN…LRIW).

This sequence belongs to the WD repeat G protein beta family. As to quaternary structure, g proteins are composed of 3 units, alpha, beta and gamma. Strongly expressed in lung and placenta, whereas it is weakly expressed in brain and heart. Abundantly expressed in the axons and Schwann cells of peripheral nerves.

Its function is as follows. Guanine nucleotide-binding proteins (G proteins) are involved as a modulator or transducer in various transmembrane signaling systems. The beta and gamma chains are required for the GTPase activity, for replacement of GDP by GTP, and for G protein-effector interaction. This is Guanine nucleotide-binding protein subunit beta-4 (GNB4) from Homo sapiens (Human).